A 710-amino-acid polypeptide reads, in one-letter code: E3 ubiquitin-protein ligase TRIM9 (710 aa).

Residues 10-50 form an RING-type zinc finger; that stretch reads CPVCGSFYREPIILPCSHNLCQACARNILVQTPESESPQSH. At Thr-41 the chain carries Phosphothreonine. Residues Ser-44, Ser-46, and Ser-49 each carry the phosphoserine modification. 2 consecutive B box-type zinc fingers follow at residues 163 to 212 and 224 to 266; these read AAAL…LVPP and RKVS…VKAL. Cys-168, Cys-171, Cys-193, His-198, Cys-229, His-232, Cys-252, and His-258 together coordinate Zn(2+). Residues 273–340 are a coiled coil; it reads HKSQLSQALN…KAQLLARVNK (68 aa). The COS domain occupies 374–432; that stretch reads IKENDPSGFLQISDALIRRVHLTEDQWGKGTLTPRMTTDFDLSLDNSPLLQSIHQLDFV. The 96-residue stretch at 440–535 folds into the Fibronectin type-III domain; that stretch reads VPATPILQLE…KTLVLQTSEV (96 aa). The 170-residue stretch at 533–702 folds into the B30.2/SPRY domain; the sequence is SEVAWFAFDP…LHTGLPVPDF (170 aa).

Belongs to the TRIM/RBCC family. As to quaternary structure, interacts with SNAP25. In terms of processing, auto-ubiquitinated. Poly-ubiquitinated in cultured cells, whereas it is monoubiquitinated in vitro. Brain. Highly expressed in the cerebral cortex (at protein level). Severely decreased in the affected brain areas in Parkinson disease and dementia with Lewy bodies.

It localises to the cytoplasm. It is found in the cell projection. The protein resides in the dendrite. The protein localises to the cytoplasmic vesicle. Its subcellular location is the secretory vesicle. It localises to the synaptic vesicle. It is found in the synapse. The protein resides in the cytoskeleton. It catalyses the reaction S-ubiquitinyl-[E2 ubiquitin-conjugating enzyme]-L-cysteine + [acceptor protein]-L-lysine = [E2 ubiquitin-conjugating enzyme]-L-cysteine + N(6)-ubiquitinyl-[acceptor protein]-L-lysine.. It participates in protein modification; protein ubiquitination. Its function is as follows. E3 ubiquitin-protein ligase which ubiquitinates itself in cooperation with an E2 enzyme UBE2D2/UBC4 and serves as a targeting signal for proteasomal degradation. May play a role in regulation of neuronal functions and may also participate in the formation or breakdown of abnormal inclusions in neurodegenerative disorders. May act as a regulator of synaptic vesicle exocytosis by controlling the availability of SNAP25 for the SNARE complex formation. In Homo sapiens (Human), this protein is E3 ubiquitin-protein ligase TRIM9 (TRIM9).